The primary structure comprises 353 residues: Fe(3+) ions import ATP-binding protein FbpC (353 aa).

In terms of domain architecture, ABC transporter spans 9-239 (VTFENVTKKF…PASAFIADFM (231 aa)). 41 to 48 (GPSGCGKT) contributes to the ATP binding site.

It belongs to the ABC transporter superfamily. Fe(3+) ion importer (TC 3.A.1.10) family. The complex is composed of two ATP-binding proteins (FbpC), two transmembrane proteins (FbpB) and a solute-binding protein (FbpA).

The protein resides in the cell inner membrane. It catalyses the reaction Fe(3+)(out) + ATP + H2O = Fe(3+)(in) + ADP + phosphate + H(+). Its function is as follows. Part of the ABC transporter complex FbpABC involved in Fe(3+) ions import. Responsible for energy coupling to the transport system. The chain is Fe(3+) ions import ATP-binding protein FbpC from Brucella suis biovar 1 (strain 1330).